The chain runs to 506 residues: Galactose/methyl galactoside import ATP-binding protein MglA (506 aa).

ABC transporter domains are found at residues 14–249 and 264–506; these read LEMS…VGRS and VILE…SLHL. 46–53 provides a ligand contact to ATP; the sequence is GENGAGKS.

This sequence belongs to the ABC transporter superfamily. Galactose/methyl galactoside importer (TC 3.A.1.2.3) family. In terms of assembly, the complex is composed of one ATP-binding protein (MglA), two transmembrane proteins (MglC) and a solute-binding protein (MglB).

The protein localises to the cell inner membrane. It carries out the reaction D-galactose(out) + ATP + H2O = D-galactose(in) + ADP + phosphate + H(+). It catalyses the reaction methyl beta-D-galactoside(out) + ATP + H2O = methyl beta-D-galactoside(in) + ADP + phosphate + H(+). In terms of biological role, part of the ABC transporter complex MglABC involved in galactose/methyl galactoside import. Responsible for energy coupling to the transport system. This Escherichia coli (strain K12) protein is Galactose/methyl galactoside import ATP-binding protein MglA.